Reading from the N-terminus, the 388-residue chain is Flavin-dependent monooxygenase (388 aa).

Arg54 provides a ligand contact to NADPH. The FAD site is built by Asp61, Arg117, and Asp311.

This sequence belongs to the aromatic-ring hydroxylase family. TetX subfamily. As to quaternary structure, monomer. FAD is required as a cofactor.

Its subcellular location is the cytoplasm. It catalyses the reaction a tetracycline + NADPH + O2 + H(+) = an 11a-hydroxytetracycline + NADP(+) + H2O. It carries out the reaction tetracycline + NADPH + O2 + H(+) = 11a-hydroxytetracycline + NADP(+) + H2O. The catalysed reaction is oxytetracycline + NADPH + O2 + H(+) = 11a-hydroxy-oxytetracycline + NADP(+) + H2O. An FAD-requiring monooxygenase active on some tetracycline antibiotic derivatives, which leads to their inactivation. Hydroxylates carbon 11a of tetracycline and some analogs. In terms of biological role, confers resistance to tetracycline via an oxidoreductase activity; NADPH is more active than NAD. Expression in E.coli leads to breakdown of tetracycline. Confers resistance to doxycycline, chlortetracycline, oxytetracycline and minocycline. The polypeptide is Flavin-dependent monooxygenase (Bacteroides fragilis).